Consider the following 473-residue polypeptide: 1-aminocyclopropane-1-carboxylate synthase (473 aa).

Substrate-binding positions include 84–85 (DY), tyrosine 145, and aspartate 151. Residue lysine 273 is modified to N6-(pyridoxal phosphate)lysine.

This sequence belongs to the class-I pyridoxal-phosphate-dependent aminotransferase family. As to quaternary structure, homodimer. Pyridoxal 5'-phosphate is required as a cofactor.

It catalyses the reaction S-adenosyl-L-methionine = 1-aminocyclopropane-1-carboxylate + S-methyl-5'-thioadenosine + H(+). It carries out the reaction (2S)-2-amino-3-butenoate + H2O = 2-oxobutanoate + NH4(+). The protein operates within alkene biosynthesis; ethylene biosynthesis via S-adenosyl-L-methionine; ethylene from S-adenosyl-L-methionine: step 1/2. Inhibited by L-aminoethoxyvinylglycine (AVG). Inhibited by L-vinylglycine (L-VG). Inhibited by S-methylmethionine through a L-VG ketimine intermediate. In terms of biological role, catalyzes the formation of 1-aminocyclopropane-1-carboxylate, a direct precursor of ethylene in higher plants. Also catalyzes the conversion of L-vinylglycine (L-VG) to alpha-ketobutyrate and ammonia. Can use S-methylmethionine as substrate. The sequence is that of 1-aminocyclopropane-1-carboxylate synthase from Malus domestica (Apple).